The following is a 428-amino-acid chain: Enolase (428 aa).

Gln163 serves as a coordination point for (2R)-2-phosphoglycerate. Residue Glu205 is the Proton donor of the active site. Mg(2+)-binding residues include Asp242, Glu285, and Asp312. The (2R)-2-phosphoglycerate site is built by Lys337, Arg366, Ser367, and Lys388. Lys337 functions as the Proton acceptor in the catalytic mechanism.

It belongs to the enolase family. It depends on Mg(2+) as a cofactor.

The protein resides in the cytoplasm. Its subcellular location is the secreted. It is found in the cell surface. It catalyses the reaction (2R)-2-phosphoglycerate = phosphoenolpyruvate + H2O. The protein operates within carbohydrate degradation; glycolysis; pyruvate from D-glyceraldehyde 3-phosphate: step 4/5. In terms of biological role, catalyzes the reversible conversion of 2-phosphoglycerate (2-PG) into phosphoenolpyruvate (PEP). It is essential for the degradation of carbohydrates via glycolysis. This Moorella thermoacetica (strain ATCC 39073 / JCM 9320) protein is Enolase.